The following is a 475-amino-acid chain: Ribulose bisphosphate carboxylase large chain (475 aa).

The propeptide occupies 1-2 (MS). The residue at position 3 (Pro3) is an N-acetylproline. Position 14 is an N6,N6,N6-trimethyllysine (Lys14). Residues Asn123 and Thr173 each contribute to the substrate site. The active-site Proton acceptor is the Lys175. Lys177 is a binding site for substrate. Mg(2+) contacts are provided by Lys201, Asp203, and Glu204. At Lys201 the chain carries N6-carboxylysine. His294 (proton acceptor) is an active-site residue. Positions 295, 327, and 379 each coordinate substrate.

Belongs to the RuBisCO large chain family. Type I subfamily. As to quaternary structure, heterohexadecamer of 8 large chains and 8 small chains; disulfide-linked. The disulfide link is formed within the large subunit homodimers. It depends on Mg(2+) as a cofactor. In terms of processing, the disulfide bond which can form in the large chain dimeric partners within the hexadecamer appears to be associated with oxidative stress and protein turnover.

Its subcellular location is the plastid. It is found in the chloroplast. It carries out the reaction 2 (2R)-3-phosphoglycerate + 2 H(+) = D-ribulose 1,5-bisphosphate + CO2 + H2O. It catalyses the reaction D-ribulose 1,5-bisphosphate + O2 = 2-phosphoglycolate + (2R)-3-phosphoglycerate + 2 H(+). RuBisCO catalyzes two reactions: the carboxylation of D-ribulose 1,5-bisphosphate, the primary event in carbon dioxide fixation, as well as the oxidative fragmentation of the pentose substrate in the photorespiration process. Both reactions occur simultaneously and in competition at the same active site. This chain is Ribulose bisphosphate carboxylase large chain, found in Liquidambar styraciflua (Sweetgum tree).